The chain runs to 120 residues: Chemokine vCXCL1 (120 aa).

Belongs to the intercrine alpha (chemokine CxC) family. Interacts with host CXCR1 and CXCR2.

Acts as a functional chemokine, inducing calcium mobilization, chemotaxis, and degranulation of neutrophils. Contributes to the induction of neutrophil chemotaxis by interacting with host CXCR1 and CXCR2 receptors. The sequence is that of Chemokine vCXCL1 (UL146) from Human cytomegalovirus (strain Merlin) (HHV-5).